The sequence spans 220 residues: Putative amino-acid transporter YisU (220 aa).

Transmembrane regions (helical) follow at residues 15-35, 67-87, 89-109, 128-148, 161-181, and 195-215; these read FFSMNAIIHGIVLAFGLILPL, TLLIVLAVAGVSVIVQELPVF, TVMMAGGFLFLLYMGWVTWNI, AFAAAVSLLNPHAILDTIGVI, WLFMAACIAVSWIWFISLAIA, and MLIVNKCSAAVMWAAAGYFGV.

It belongs to the LysE/ArgO transporter (TC 2.A.75) family.

It localises to the cell membrane. The chain is Putative amino-acid transporter YisU (yisU) from Bacillus subtilis (strain 168).